The chain runs to 122 residues: Large ribosomal subunit protein uL14 (122 aa).

This sequence belongs to the universal ribosomal protein uL14 family. As to quaternary structure, part of the 50S ribosomal subunit. Forms a cluster with proteins L3 and L19. In the 70S ribosome, L14 and L19 interact and together make contacts with the 16S rRNA in bridges B5 and B8.

In terms of biological role, binds to 23S rRNA. Forms part of two intersubunit bridges in the 70S ribosome. The chain is Large ribosomal subunit protein uL14 from Heliobacterium modesticaldum (strain ATCC 51547 / Ice1).